The primary structure comprises 65 residues: MGFKLVLFIAVLTLVGSSNAEISAKMDSRDSPMIQERRCLPAGKTCVRGPMRVPCCGSCSQNKCT.

A signal peptide spans 1–20 (MGFKLVLFIAVLTLVGSSNA). Positions 21–36 (EISAKMDSRDSPMIQE) are excised as a propeptide. 3 disulfide bridges follow: cysteine 39/cysteine 56, cysteine 46/cysteine 59, and cysteine 55/cysteine 64.

This sequence belongs to the neurotoxin 36 family. 02 subfamily. Expressed by the venom gland.

It is found in the secreted. Possesses strong antiplasmodial activity against the intra-erythrocyte stage of P.falciparum in vitro. IC(50) for inhibiting P.falciparum growth is 1.15 uM. Specifically interacts with infected erythrocytes. Does not lyse erythrocytes, is not cytotoxic to nucleated mammalian cells, and does not inhibit neuromuscular function. Has neither antibacterial nor antifungal activity. The polypeptide is U2-theraphotoxin-Pc1a (Psalmopoeus cambridgei (Trinidad chevron tarantula)).